Reading from the N-terminus, the 129-residue chain is Phosphoribosyl-AMP cyclohydrolase (129 aa).

Asp-85 is a binding site for Mg(2+). Residue Cys-86 coordinates Zn(2+). Residues Asp-87 and Asp-89 each coordinate Mg(2+). Zn(2+) is bound by residues Cys-102 and Cys-109.

This sequence belongs to the PRA-CH family. In terms of assembly, homodimer. It depends on Mg(2+) as a cofactor. Zn(2+) is required as a cofactor.

The protein localises to the cytoplasm. It catalyses the reaction 1-(5-phospho-beta-D-ribosyl)-5'-AMP + H2O = 1-(5-phospho-beta-D-ribosyl)-5-[(5-phospho-beta-D-ribosylamino)methylideneamino]imidazole-4-carboxamide. Its pathway is amino-acid biosynthesis; L-histidine biosynthesis; L-histidine from 5-phospho-alpha-D-ribose 1-diphosphate: step 3/9. Functionally, catalyzes the hydrolysis of the adenine ring of phosphoribosyl-AMP. The sequence is that of Phosphoribosyl-AMP cyclohydrolase from Methanococcus maripaludis (strain C7 / ATCC BAA-1331).